We begin with the raw amino-acid sequence, 523 residues long: Factor arrest protein 8 (523 aa).

Residues 26-76 (TKNERDRITWELERSEMKARIAELEGENRDLKHQLNQIQSKAVSPEGEKEE) adopt a coiled-coil conformation. Positions 61 to 80 (NQIQSKAVSPEGEKEEKHVP) are disordered. Residues 71–80 (EGEKEEKHVP) are compositionally biased toward basic and acidic residues. Residue S115 is modified to Phosphoserine. The residue at position 132 (T132) is a Phosphothreonine. A disordered region spans residues 150–171 (ALLDTKPNPKQGPSESPSPTKV). Residues 160 to 171 (QGPSESPSPTKV) are compositionally biased toward polar residues.

Component of a complex at least composed of FAR3, FAR7, FAR8, FAR10, FAR11 and VPS64.

The protein localises to the cytoplasm. It is found in the endoplasmic reticulum. Functionally, participates in the control of the reentry into the cell cycle following pheromone treatment. In Saccharomyces cerevisiae (strain ATCC 204508 / S288c) (Baker's yeast), this protein is Factor arrest protein 8 (FAR8).